The primary structure comprises 87 residues: Small ribosomal subunit protein uS17 (87 aa).

Belongs to the universal ribosomal protein uS17 family. Part of the 30S ribosomal subunit.

In terms of biological role, one of the primary rRNA binding proteins, it binds specifically to the 5'-end of 16S ribosomal RNA. This Staphylococcus carnosus (strain TM300) protein is Small ribosomal subunit protein uS17.